Here is a 483-residue protein sequence, read N- to C-terminus: tRNA sulfurtransferase (483 aa).

The THUMP domain occupies 61-165 (PLVADALTLI…NDRLLLITER (105 aa)). Residues 183-184 (LI), K265, G287, and Q296 each bind ATP. A disulfide bridge connects residues C344 and C457. Positions 405–483 (LGSGDVVLDI…GFQNVKVYRP (79 aa)) constitute a Rhodanese domain. C457 (cysteine persulfide intermediate) is an active-site residue.

This sequence belongs to the ThiI family.

It localises to the cytoplasm. It catalyses the reaction [ThiI sulfur-carrier protein]-S-sulfanyl-L-cysteine + a uridine in tRNA + 2 reduced [2Fe-2S]-[ferredoxin] + ATP + H(+) = [ThiI sulfur-carrier protein]-L-cysteine + a 4-thiouridine in tRNA + 2 oxidized [2Fe-2S]-[ferredoxin] + AMP + diphosphate. It carries out the reaction [ThiS sulfur-carrier protein]-C-terminal Gly-Gly-AMP + S-sulfanyl-L-cysteinyl-[cysteine desulfurase] + AH2 = [ThiS sulfur-carrier protein]-C-terminal-Gly-aminoethanethioate + L-cysteinyl-[cysteine desulfurase] + A + AMP + 2 H(+). It functions in the pathway cofactor biosynthesis; thiamine diphosphate biosynthesis. Functionally, catalyzes the ATP-dependent transfer of a sulfur to tRNA to produce 4-thiouridine in position 8 of tRNAs, which functions as a near-UV photosensor. Also catalyzes the transfer of sulfur to the sulfur carrier protein ThiS, forming ThiS-thiocarboxylate. This is a step in the synthesis of thiazole, in the thiamine biosynthesis pathway. The sulfur is donated as persulfide by IscS. This is tRNA sulfurtransferase from Sodalis glossinidius (strain morsitans).